The following is a 472-amino-acid chain: 3-isopropylmalate dehydratase large subunit (472 aa).

The tract at residues 289–312 is disordered; sequence TWGTNPAQGTGVSQVVPSPDDAKD. Over residues 290–304 the composition is skewed to polar residues; the sequence is WGTNPAQGTGVSQVV. [4Fe-4S] cluster-binding residues include Cys347, Cys407, and Cys410.

The protein belongs to the aconitase/IPM isomerase family. LeuC type 1 subfamily. As to quaternary structure, heterodimer of LeuC and LeuD. The cofactor is [4Fe-4S] cluster.

It catalyses the reaction (2R,3S)-3-isopropylmalate = (2S)-2-isopropylmalate. Its pathway is amino-acid biosynthesis; L-leucine biosynthesis; L-leucine from 3-methyl-2-oxobutanoate: step 2/4. In terms of biological role, catalyzes the isomerization between 2-isopropylmalate and 3-isopropylmalate, via the formation of 2-isopropylmaleate. This is 3-isopropylmalate dehydratase large subunit from Halalkalibacterium halodurans (strain ATCC BAA-125 / DSM 18197 / FERM 7344 / JCM 9153 / C-125) (Bacillus halodurans).